We begin with the raw amino-acid sequence, 274 residues long: Outer surface protein A (274 aa).

Positions 1 to 16 (MKKYLLGIGLILALIA) are cleaved as a signal peptide. Cys17 carries the N-palmitoyl cysteine lipid modification. Cys17 is lipidated: S-diacylglycerol cysteine.

Belongs to the OspA lipoprotein family.

It localises to the cell outer membrane. The protein resides in the cell surface. The polypeptide is Outer surface protein A (Borreliella burgdorferi (Lyme disease spirochete)).